We begin with the raw amino-acid sequence, 657 residues long: 2',3'-cyclic-nucleotide 2'-phosphodiesterase/3'-nucleotidase (657 aa).

An N-terminal signal peptide occupies residues 1–26 (MMNRRHFIQISATSILALSANRFAMA). 7 residues coordinate a divalent metal cation: D41, H43, D86, N126, H235, H267, and H269. Substrate is bound by residues Y450 and 554-559 (YRAYGN).

This sequence belongs to the 5'-nucleotidase family. A divalent metal cation is required as a cofactor.

The protein localises to the periplasm. The catalysed reaction is a nucleoside 2',3'-cyclic phosphate + H2O = a nucleoside 3'-phosphate + H(+). The enzyme catalyses a ribonucleoside 3'-phosphate + H2O = a ribonucleoside + phosphate. Its function is as follows. This bifunctional enzyme catalyzes two consecutive reactions during ribonucleic acid degradation. Converts a 2',3'-cyclic nucleotide to a 3'-nucleotide and then the 3'-nucleotide to the corresponding nucleoside and phosphate. The protein is 2',3'-cyclic-nucleotide 2'-phosphodiesterase/3'-nucleotidase (cpdB) of Haemophilus influenzae (strain ATCC 51907 / DSM 11121 / KW20 / Rd).